The sequence spans 271 residues: Dirigent protein 17 (271 aa).

A compositionally biased stretch (polar residues) spans Met1–Gln12. The segment at Met1–Pro22 is disordered. Asn255 carries N-linked (GlcNAc...) asparagine glycosylation.

This sequence belongs to the plant dirigent protein family. Homodimer.

The protein localises to the secreted. It localises to the extracellular space. Its subcellular location is the apoplast. In terms of biological role, dirigent proteins impart stereoselectivity on the phenoxy radical-coupling reaction, yielding optically active lignans from two molecules of coniferyl alcohol in the biosynthesis of lignans, flavonolignans, and alkaloids and thus plays a central role in plant secondary metabolism. This chain is Dirigent protein 17 (DIR17), found in Arabidopsis thaliana (Mouse-ear cress).